The following is a 5488-amino-acid chain: Polyketide synthase PksN (5488 aa).

Residues 3–301 (RQLKSPLSEG…NMMAVRSKNI (299 aa)) are condensation. A WD 1 repeat occupies 165–205 (QQPSTADYYDFVDWENRMLTGREGEEHLAYWKEQLSGSLPV). Residues 493–903 (TYKEVDEKST…EFPGILDQAV (411 aa)) are adenylation. The stretch at 965-1006 (RKELEKREIVFNRRKPNHLQLTEIEDQVLRIWEETLKVSGFG) is one WD 2 repeat. Positions 983 to 1058 (LQLTEIEDQV…AISEYILEMK (76 aa)) constitute a Carrier 1 domain. Ser-1018 carries the O-(pantetheine 4'-phosphoryl)serine modification. One can recognise a Ketosynthase family 3 (KS3) 1 domain in the interval 1089 to 1515 (DDSVAIVGIS…GTNAHAIFEQ (427 aa)). Catalysis depends on for beta-ketoacyl synthase 1 activity residues Cys-1261, His-1397, and His-1437. Residues 1700–1826 (HPLVHHNTSV…GKAELIQLKR (127 aa)) are N-terminal hotdog fold 1. The PKS/mFAS DH 1 domain occupies 1700–1992 (HPLVHHNTSV…TRVMEADIQT (293 aa)). The Proton acceptor; for dehydratase activity 1 role is filled by His-1729. Residues 1840–1992 (DQSKMDAASF…TRVMEADIQT (153 aa)) form a C-terminal hotdog fold 1 region. Asp-1900 serves as the catalytic Proton donor; for dehydratase activity 1. The WD 3 repeat unit spans residues 2165-2204 (KQAKGDGSKPWKDNGVYLISGGAGGLGHIFAKEIAEQTKN). The Carrier 2 domain maps to 2448-2525 (SLLDKVKAML…AFGKHLSEEY (78 aa)). Ser-2485 carries the post-translational modification O-(pantetheine 4'-phosphoryl)serine. The region spanning 2576–3012 (PEPIAIVGIS…GVNAHVIIEE (437 aa)) is the Ketosynthase family 3 (KS3) 2 domain. Catalysis depends on for beta-ketoacyl synthase 2 activity residues Cys-2747, His-2882, and His-2928. A coiled-coil region spans residues 3038 to 3109 (KNEARLKEHA…AAEKSGVEDV (72 aa)). Residues 3207 to 3332 (HPLMHQNTSN…GSAVLNPAEN (126 aa)) form an N-terminal hotdog fold 2 region. The PKS/mFAS DH 2 domain maps to 3207-3492 (HPLMHQNTSN…FRAAEGGSGS (286 aa)). His-3236 (proton acceptor; for dehydratase activity 2) is an active-site residue. Residues 3346 to 3492 (QESHFSVNEV…FRAAEGGSGS (147 aa)) form a C-terminal hotdog fold 2 region. Catalysis depends on Asp-3408, which acts as the Proton donor; for dehydratase activity 2. Positions 3626 to 3655 (DSHENVESVIEKLKENKRHTEDQHIKYEKG) form a coiled coil. The WD 4 repeat unit spans residues 3666–3705 (QIDDREISMPWRDKGVYLITGGAGGLGFIFAKEIARQAEQ). The Carrier 3 domain maps to 3952–4026 (DHIQEVLKQT…AFAGYLSEEY (75 aa)). Ser-3986 is modified (O-(pantetheine 4'-phosphoryl)serine). Residues 4076–4511 (PEPIAIVGMS…GVNAHVVIEE (436 aa)) enclose the Ketosynthase family 3 (KS3) 3 domain. Catalysis depends on for beta-ketoacyl synthase 3 activity residues Cys-4245, His-4380, and His-4427. Positions 4706 to 4830 (HPLIHVNTSD…GSASIRGAGD (125 aa)) are N-terminal hotdog fold 3. In terms of domain architecture, PKS/mFAS DH 3 spans 4706-4988 (HPLIHVNTSD…SRLLEEGIQP (283 aa)). The Proton acceptor; for dehydratase activity 3 role is filled by His-4735. The C-terminal hotdog fold 3 stretch occupies residues 4844–4988 (SLSTLSHDQC…SRLLEEGIQP (145 aa)). Catalysis depends on Asp-4906, which acts as the Proton donor; for dehydratase activity 3. The stretch at 5206–5244 (HNNQPVHTKYKHGGVYVVIGGAGGIGEAWSEYMIRTYQA) is one WD 5 repeat. Residues 5275–5303 (IQADAANREELERAYETMKQTHREINGII) are a coiled coil.

This sequence belongs to the ATP-dependent AMP-binding enzyme family. Requires pantetheine 4'-phosphate as cofactor.

The protein localises to the cytoplasm. It functions in the pathway antibiotic biosynthesis; bacillaene biosynthesis. In terms of biological role, involved in some intermediate steps for the synthesis of the antibiotic polyketide bacillaene which is involved in secondary metabolism. The sequence is that of Polyketide synthase PksN (pksN) from Bacillus subtilis (strain 168).